We begin with the raw amino-acid sequence, 274 residues long: 4-hydroxy-3-methylbut-2-enyl diphosphate reductase (274 aa).

Position 12 (C12) interacts with [4Fe-4S] cluster. Residues H36 and H70 each coordinate (2E)-4-hydroxy-3-methylbut-2-enyl diphosphate. Residues H36 and H70 each contribute to the dimethylallyl diphosphate site. The isopentenyl diphosphate site is built by H36 and H70. C92 serves as a coordination point for [4Fe-4S] cluster. H120 is a binding site for (2E)-4-hydroxy-3-methylbut-2-enyl diphosphate. H120 is a binding site for dimethylallyl diphosphate. Position 120 (H120) interacts with isopentenyl diphosphate. Catalysis depends on E122, which acts as the Proton donor. T158 contributes to the (2E)-4-hydroxy-3-methylbut-2-enyl diphosphate binding site. C186 is a binding site for [4Fe-4S] cluster. 4 residues coordinate (2E)-4-hydroxy-3-methylbut-2-enyl diphosphate: S214, S215, N216, and S258. 4 residues coordinate dimethylallyl diphosphate: S214, S215, N216, and S258. 4 residues coordinate isopentenyl diphosphate: S214, S215, N216, and S258.

It belongs to the IspH family. It depends on [4Fe-4S] cluster as a cofactor.

The catalysed reaction is isopentenyl diphosphate + 2 oxidized [2Fe-2S]-[ferredoxin] + H2O = (2E)-4-hydroxy-3-methylbut-2-enyl diphosphate + 2 reduced [2Fe-2S]-[ferredoxin] + 2 H(+). The enzyme catalyses dimethylallyl diphosphate + 2 oxidized [2Fe-2S]-[ferredoxin] + H2O = (2E)-4-hydroxy-3-methylbut-2-enyl diphosphate + 2 reduced [2Fe-2S]-[ferredoxin] + 2 H(+). It functions in the pathway isoprenoid biosynthesis; dimethylallyl diphosphate biosynthesis; dimethylallyl diphosphate from (2E)-4-hydroxy-3-methylbutenyl diphosphate: step 1/1. The protein operates within isoprenoid biosynthesis; isopentenyl diphosphate biosynthesis via DXP pathway; isopentenyl diphosphate from 1-deoxy-D-xylulose 5-phosphate: step 6/6. Its function is as follows. Catalyzes the conversion of 1-hydroxy-2-methyl-2-(E)-butenyl 4-diphosphate (HMBPP) into a mixture of isopentenyl diphosphate (IPP) and dimethylallyl diphosphate (DMAPP). Acts in the terminal step of the DOXP/MEP pathway for isoprenoid precursor biosynthesis. The polypeptide is 4-hydroxy-3-methylbut-2-enyl diphosphate reductase (Helicobacter pylori (strain Shi470)).